The chain runs to 308 residues: HPr kinase/phosphorylase (308 aa).

Active-site residues include H138 and K159. Residue 153-160 (GESGLGKS) participates in ATP binding. S160 is a binding site for Mg(2+). D177 (proton acceptor; for phosphorylation activity. Proton donor; for dephosphorylation activity) is an active-site residue. An important for the catalytic mechanism of both phosphorylation and dephosphorylation region spans residues 201–210 (LEVRGLGLLD). Mg(2+) is bound at residue E202. R243 is a catalytic residue. The interval 264–269 (QVAAGR) is important for the catalytic mechanism of dephosphorylation.

The protein belongs to the HPrK/P family. In terms of assembly, homohexamer. Mg(2+) is required as a cofactor.

It carries out the reaction [HPr protein]-L-serine + ATP = [HPr protein]-O-phospho-L-serine + ADP + H(+). The enzyme catalyses [HPr protein]-O-phospho-L-serine + phosphate + H(+) = [HPr protein]-L-serine + diphosphate. In terms of biological role, catalyzes the ATP- as well as the pyrophosphate-dependent phosphorylation of a specific serine residue in HPr, a phosphocarrier protein of the phosphoenolpyruvate-dependent sugar phosphotransferase system (PTS). HprK/P also catalyzes the pyrophosphate-producing, inorganic phosphate-dependent dephosphorylation (phosphorolysis) of seryl-phosphorylated HPr (P-Ser-HPr). In Bordetella pertussis (strain Tohama I / ATCC BAA-589 / NCTC 13251), this protein is HPr kinase/phosphorylase.